A 159-amino-acid polypeptide reads, in one-letter code: Large ribosomal subunit protein uL15 (159 aa).

Residues 21–34 (LRPAPGAHKSKIRV) are compositionally biased toward basic residues. Residues 21 to 55 (LRPAPGAHKSKIRVGRGEGSKGKTAGRGTKGSKAR) form a disordered region.

This sequence belongs to the universal ribosomal protein uL15 family. As to quaternary structure, part of the 50S ribosomal subunit.

Its function is as follows. Binds to the 23S rRNA. The protein is Large ribosomal subunit protein uL15 of Frankia casuarinae (strain DSM 45818 / CECT 9043 / HFP020203 / CcI3).